Reading from the N-terminus, the 151-residue chain is Small ribosomal subunit protein uS11A (151 aa).

A disordered region spans residues 131 to 151; sequence DVTPIPSDSTRRKGGRRGRRL. Positions 142-151 are enriched in basic residues; that stretch reads RKGGRRGRRL.

Belongs to the universal ribosomal protein uS11 family.

This chain is Small ribosomal subunit protein uS11A, found in Drosophila melanogaster (Fruit fly).